The sequence spans 311 residues: Malate dehydrogenase (311 aa).

NAD(+)-binding positions include 7-13 (GAAGGIG) and Asp34. Substrate-binding residues include Arg81 and Arg87. NAD(+) contacts are provided by residues Asn94 and 117-119 (ITN). Asn119 and Arg153 together coordinate substrate. His177 (proton acceptor) is an active-site residue. Met227 serves as a coordination point for NAD(+).

This sequence belongs to the LDH/MDH superfamily. MDH type 1 family. In terms of assembly, homodimer.

It catalyses the reaction (S)-malate + NAD(+) = oxaloacetate + NADH + H(+). Its function is as follows. Catalyzes the reversible oxidation of malate to oxaloacetate. The sequence is that of Malate dehydrogenase from Pseudoalteromonas atlantica (strain T6c / ATCC BAA-1087).